The primary structure comprises 139 residues: MITADEQDHEFFDILYQQWAKSTGAEKTYWMPEEVEPPSICETDHGLEDHVIWAVNQETQDKDLVASHLSEADADFICGLHGAIPDLIRRLHEAIDEATSKDEARDRAEANLAEAYLENQGLQERIRELESELSYWSNR.

The chain is Gene 39 protein (39) from Mycobacterium (Mycobacteriophage L5).